The chain runs to 380 residues: MPTTELISYDEAQNSAFDNVLHGKSKESRGGMRAMMNKDNKAHAAAVDEYFQFFDNKKAEDEVEAVRQERTDNYASLTRQYYNLATDLYEYGWSQSFHFCRFAYGESFDRAIARHEHYLAHNIGIKPGMKVLDVGCGVGGPAREIVKFTGAHVTGLNINEYQVGRAGIYAEKEGLSDKLKFVQGDFMKMPFPDNSFDAVYAIEATVHAPSLEGVYSEIRRVLKPGGIFGVYEWLMTDIYDNDDLEQRRIRLDIELGDGIAQMFKIDHGLSAIKAAGFELLHHEDLAATDDGTAPWYWPLDSDMRYAQNLSDLLTVFRMNKWGRLVMHNLIGVLEACSIAPKGTRKTADGLAKGADALVEGGKRKLFTPMYLMVGKKPEKI.

The protein belongs to the class I-like SAM-binding methyltransferase superfamily. Erg6/SMT family.

It catalyses the reaction lanosterol + S-adenosyl-L-methionine = eburicol + S-adenosyl-L-homocysteine + H(+). Its pathway is steroid metabolism; ergosterol biosynthesis. Its function is as follows. Sterol 24-C-methyltransferase; part of the third module of ergosterol biosynthesis pathway that includes the late steps of the pathway. ERG6A and ERG6B methylate lanosterol at C-24 to produce eburicol. The third module or late pathway involves the ergosterol synthesis itself through consecutive reactions that mainly occur in the endoplasmic reticulum (ER) membrane. Firstly, the squalene synthase ERG9 catalyzes the condensation of 2 farnesyl pyrophosphate moieties to form squalene, which is the precursor of all steroids. Squalene synthase is crucial for balancing the incorporation of farnesyl diphosphate (FPP) into sterol and nonsterol isoprene synthesis. Secondly, squalene is converted into lanosterol by the consecutive action of the squalene epoxidase ERG1 and the lanosterol synthase ERG7. Then, the delta(24)-sterol C-methyltransferase ERG6 methylates lanosterol at C-24 to produce eburicol. Eburicol is the substrate of the sterol 14-alpha demethylase encoded by CYP51A, CYP51B and CYP51C, to yield 4,4,24-trimethyl ergosta-8,14,24(28)-trienol. CYP51B encodes the enzyme primarily responsible for sterol 14-alpha-demethylation, and plays an essential role in ascospore formation. CYP51A encodes an additional sterol 14-alpha-demethylase, induced on ergosterol depletion and responsible for the intrinsic variation in azole sensitivity. The third CYP51 isoform, CYP51C, does not encode a sterol 14-alpha-demethylase, but is required for full virulence on host wheat ears. The C-14 reductase ERG24 then reduces the C14=C15 double bond which leads to 4,4-dimethylfecosterol. A sequence of further demethylations at C-4, involving the C-4 demethylation complex containing the C-4 methylsterol oxidases ERG25, the sterol-4-alpha-carboxylate 3-dehydrogenase ERG26 and the 3-keto-steroid reductase ERG27, leads to the production of fecosterol via 4-methylfecosterol. ERG28 has a role as a scaffold to help anchor ERG25, ERG26 and ERG27 to the endoplasmic reticulum. The C-8 sterol isomerase ERG2 then catalyzes the reaction which results in unsaturation at C-7 in the B ring of sterols and thus converts fecosterol to episterol. The sterol-C5-desaturases ERG3A and ERG3BB then catalyze the introduction of a C-5 double bond in the B ring to produce 5-dehydroepisterol. The C-22 sterol desaturases ERG5A and ERG5B further convert 5-dehydroepisterol into ergosta-5,7,22,24(28)-tetraen-3beta-ol by forming the C-22(23) double bond in the sterol side chain. Finally, ergosta-5,7,22,24(28)-tetraen-3beta-ol is substrate of the C-24(28) sterol reductase ERG4 to produce ergosterol. The protein is Sterol 24-C-methyltransferase ERG6B of Gibberella zeae (strain ATCC MYA-4620 / CBS 123657 / FGSC 9075 / NRRL 31084 / PH-1) (Wheat head blight fungus).